Consider the following 96-residue polypeptide: Large ribosomal subunit protein uL23 (96 aa).

This sequence belongs to the universal ribosomal protein uL23 family. Part of the 50S ribosomal subunit. Contacts protein L29, and trigger factor when it is bound to the ribosome.

Functionally, one of the early assembly proteins it binds 23S rRNA. One of the proteins that surrounds the polypeptide exit tunnel on the outside of the ribosome. Forms the main docking site for trigger factor binding to the ribosome. This chain is Large ribosomal subunit protein uL23, found in Oleidesulfovibrio alaskensis (strain ATCC BAA-1058 / DSM 17464 / G20) (Desulfovibrio alaskensis).